Consider the following 413-residue polypeptide: Phosphoglycerate kinase (413 aa).

Residues 19–21 (DLN), arginine 34, 57–60 (HQSK), arginine 114, and arginine 154 contribute to the substrate site. Residues glutamate 332 and 358–361 (GGHS) contribute to the ATP site.

The protein belongs to the phosphoglycerate kinase family. As to quaternary structure, monomer.

It is found in the cytoplasm. The catalysed reaction is (2R)-3-phosphoglycerate + ATP = (2R)-3-phospho-glyceroyl phosphate + ADP. It functions in the pathway carbohydrate degradation; glycolysis; pyruvate from D-glyceraldehyde 3-phosphate: step 2/5. The chain is Phosphoglycerate kinase from Thermococcus sibiricus (strain DSM 12597 / MM 739).